The chain runs to 72 residues: uncharacterized protein (72 aa).

A helical membrane pass occupies residues 23-45 (ITNLLITTILLCFFNATTYWKLF).

The protein resides in the membrane. This is an uncharacterized protein from Schizosaccharomyces pombe (strain 972 / ATCC 24843) (Fission yeast).